The primary structure comprises 7214 residues: Nonribosomal peptide synthetase atnA (7214 aa).

An adenylation 1 region spans residues 257 to 651 (ERKALEQPHA…VGRKDTQVKI (395 aa)). The region spanning 786–862 (EPVTETEKAV…AMSQIAVELS (77 aa)) is the Carrier 1 domain. Ser823 carries the post-translational modification O-(pantetheine 4'-phosphoryl)serine. The condensation 1 stretch occupies residues 899–1318 (EDAYPATALQ…LVSQKDYTQI (420 aa)). The interval 1340–1735 (QVLATPDAPA…ARKDTQAKVR (396 aa)) is adenylation 2. The region spanning 1877-1953 (QPTSDIEKKV…ALAGRAQYIE (77 aa)) is the Carrier 2 domain. Position 1914 is an O-(pantetheine 4'-phosphoryl)serine (Ser1914). An epimerization region spans residues 1962–2384 (PEAEVIDEWF…RQVLETGIDE (423 aa)). Positions 2431-2845 (SPCSPMQLGL…MLSPLDRASL (415 aa)) are condensation 2. The tract at residues 2866-3262 (QNARKRPHAL…VGRKDTQVKV (397 aa)) is adenylation 3. One can recognise a Carrier 3 domain in the interval 3398–3472 (ALETPMEETI…DMARIVVAAY (75 aa)). Ser3433 is subject to O-(pantetheine 4'-phosphoryl)serine. The tract at residues 3510 to 3904 (VEDVYPSTSL…QLCENEDGRL (395 aa)) is condensation 3. Residues 3943–4339 (ERARLHPDLL…VGRKDSQVKL (397 aa)) are adenylation 4. The region spanning 4476 to 4552 (VPGSEAEKVI…ELAGRVTSIS (77 aa)) is the Carrier 4 domain. Ser4513 carries the O-(pantetheine 4'-phosphoryl)serine modification. The tract at residues 4601–5033 (VEDVYPCSPL…TSAAMRAQLL (433 aa)) is condensation 4. An adenylation 5 region spans residues 5051 to 5446 (FHRTALRYPE…VGRKDTQIKF (396 aa)). The segment at 5489-5515 (FITTEGGSGHENKGSPSLKGSSGDPVS) is disordered. In terms of domain architecture, Carrier 5 spans 5591–5667 (APRTAMEKRL…QMANIVARNA (77 aa)). Residue Ser5628 is modified to O-(pantetheine 4'-phosphoryl)serine. Residues 5707-6123 (QDVYPCTPLQ…HLLGDNEIKM (417 aa)) are condensation 5. Positions 6145–6543 (ERAVLQPEAI…GRKDTQIKLR (399 aa)) are adenylation 6. The Carrier 6 domain occupies 6683–6766 (DPADKLALAL…DVARMIEHGN (84 aa)). The residue at position 6725 (Ser6725) is an O-(pantetheine 4'-phosphoryl)serine. The tract at residues 6814 to 7194 (ILLTGATGFL…KSISYMRQIG (381 aa)) is thioesterase (TE) domain. The interval 6895–6915 (STVEGRDHPGSESGSTAGPAE) is disordered.

It belongs to the NRP synthetase family.

The protein operates within secondary metabolite biosynthesis. Its function is as follows. Nonribosomal peptide synthetase; part of the gene cluster that mediates the biosynthesis of aspercryptins, linear lipopeptides built from six amino acids including 2 highly unusual and nonproteogenic amino acids, 2-amino-octanoic acid (2aoa) and 2-amino-dodecanol (2adol). The core structure of aspercryptins is as follows: Ser/Ala-Thr-Ile/Val-2aoa-Asn-2adol. The first step of aspercryptin biosynthesis is the generation of the fatty acid precursors, octanoic and dodecanoic acids, by the FAS subunits atnF and atnM. The fatty acid precursors are likely transformed into the corresponding alpha-amino fatty acids in three steps. First, they are hydroxylated by the cytochrome P450 monooxygenase atnE, then oxidized to the corresponding alpha-keto acids by the NAD(P)-dependent oxidoreductase atnD, and finally converted to the alpha-amino fatty acids by the PLP-dependent aminotransferases atnH or atnJ. the alpha-amino fatty acids, 2-amino-octanoic and 2-amino-dodecanoic acids, are recognized, activated, and covalently tethered to the NRPS atnA by its fourth and sixth adenylation domains. The second module of atnA is the Thr module and contains an epimerase (E) domain responsible for the epimerization of Thr to D-allo-Thr. Additionally, despite atnA having only one epimerase domain, the first amino acid of aspercryptin A1 is D-Ser, suggesting that serine is either loaded directly as D-Ser on the first module or that the epimerase domain in the threonine module epimerizes both L-Ser and L-Thr. After condensation of the hexapeptide of aspercryptin, the C-terminal reductase (TE) domain might be involved in the reductive release and production of the aldehyde hexapeptide. Further reduction would generate aspercryptins. The variety of aspercryptins produced reflects the flexibility of the atnA NRPS, allowing incorporation of alanine instead of serine, valine for isoleucine, and a C10 fatty amino alcohol instead of the C12 version. AtnB seems to be involved in the selectivity for Ile versus Val by the third module. Moreover, type B, C and D aspercryptins have an additional N-terminal cichorine, acetyl and propionyl group respectively. The sequence is that of Nonribosomal peptide synthetase atnA from Emericella nidulans (strain FGSC A4 / ATCC 38163 / CBS 112.46 / NRRL 194 / M139) (Aspergillus nidulans).